The primary structure comprises 218 residues: GTP cyclohydrolase 1 (218 aa).

Residues Cys109, His112, and Cys180 each coordinate Zn(2+).

Belongs to the GTP cyclohydrolase I family. In terms of assembly, toroid-shaped homodecamer, composed of two pentamers of five dimers.

The enzyme catalyses GTP + H2O = 7,8-dihydroneopterin 3'-triphosphate + formate + H(+). Its pathway is cofactor biosynthesis; 7,8-dihydroneopterin triphosphate biosynthesis; 7,8-dihydroneopterin triphosphate from GTP: step 1/1. This is GTP cyclohydrolase 1 (folE) from Haemophilus influenzae (strain ATCC 51907 / DSM 11121 / KW20 / Rd).